The primary structure comprises 421 residues: 4-hydroxy-3-methylbut-2-en-1-yl diphosphate synthase (flavodoxin) (421 aa).

Residues 1–20 form a disordered region; sequence MHDAVTRPTPPSDATSWPRR. C311, C314, C357, and E364 together coordinate [4Fe-4S] cluster.

It belongs to the IspG family. Requires [4Fe-4S] cluster as cofactor.

The enzyme catalyses (2E)-4-hydroxy-3-methylbut-2-enyl diphosphate + oxidized [flavodoxin] + H2O + 2 H(+) = 2-C-methyl-D-erythritol 2,4-cyclic diphosphate + reduced [flavodoxin]. It functions in the pathway isoprenoid biosynthesis; isopentenyl diphosphate biosynthesis via DXP pathway; isopentenyl diphosphate from 1-deoxy-D-xylulose 5-phosphate: step 5/6. Its function is as follows. Converts 2C-methyl-D-erythritol 2,4-cyclodiphosphate (ME-2,4cPP) into 1-hydroxy-2-methyl-2-(E)-butenyl 4-diphosphate. The chain is 4-hydroxy-3-methylbut-2-en-1-yl diphosphate synthase (flavodoxin) from Stenotrophomonas maltophilia (strain R551-3).